Reading from the N-terminus, the 105-residue chain is UPF0235 protein A1C_06510 (105 aa).

The protein belongs to the UPF0235 family.

This Rickettsia akari (strain Hartford) protein is UPF0235 protein A1C_06510.